A 215-amino-acid polypeptide reads, in one-letter code: Protein-L-isoaspartate O-methyltransferase (215 aa).

Serine 62 is a catalytic residue.

It belongs to the methyltransferase superfamily. L-isoaspartyl/D-aspartyl protein methyltransferase family.

The protein resides in the cytoplasm. It catalyses the reaction [protein]-L-isoaspartate + S-adenosyl-L-methionine = [protein]-L-isoaspartate alpha-methyl ester + S-adenosyl-L-homocysteine. Functionally, catalyzes the methyl esterification of L-isoaspartyl residues in peptides and proteins that result from spontaneous decomposition of normal L-aspartyl and L-asparaginyl residues. It plays a role in the repair and/or degradation of damaged proteins. The protein is Protein-L-isoaspartate O-methyltransferase of Bradyrhizobium sp. (strain ORS 278).